The primary structure comprises 379 residues: Oxidized polyvinyl alcohol hydrolase (379 aa).

The N-terminal stretch at 1–23 (MNQSLGVLRLTRGVIALALASVA) is a signal peptide. Residues Ser-203 and Ser-309 each act as charge relay system in the active site.

This sequence belongs to the peptidase S9A family. In terms of assembly, monomer.

The catalysed reaction is nonane-4,6-dione + H2O = pentan-2-one + butanoate + H(+). Catalyzes the hydrolysis of 4,6-nonanedione, a beta-diketone compound. Also mediates hydrolysis of oxidized polyvinyl alcohol (PVA) in the second step in the degradation of polyvinyl alcohol. Not active toward the monoketone structure. The polypeptide is Oxidized polyvinyl alcohol hydrolase (pvaB) (Pseudomonas sp).